Consider the following 390-residue polypeptide: Chorismate synthase 1 (390 aa).

NADP(+)-binding residues include Arg-39 and Arg-45. The interval 95–117 (EQEEKEMKRKVTKPRPGHADLNG) is disordered. Residues 132-134 (RSS), 253-254 (NA), Gly-298, 313-317 (KPIPT), and Arg-339 each bind FMN.

Belongs to the chorismate synthase family. Homotetramer. FMNH2 serves as cofactor.

It carries out the reaction 5-O-(1-carboxyvinyl)-3-phosphoshikimate = chorismate + phosphate. It functions in the pathway metabolic intermediate biosynthesis; chorismate biosynthesis; chorismate from D-erythrose 4-phosphate and phosphoenolpyruvate: step 7/7. Functionally, catalyzes the anti-1,4-elimination of the C-3 phosphate and the C-6 proR hydrogen from 5-enolpyruvylshikimate-3-phosphate (EPSP) to yield chorismate, which is the branch point compound that serves as the starting substrate for the three terminal pathways of aromatic amino acid biosynthesis. This reaction introduces a second double bond into the aromatic ring system. The chain is Chorismate synthase 1 from Bacillus cereus (strain ATCC 14579 / DSM 31 / CCUG 7414 / JCM 2152 / NBRC 15305 / NCIMB 9373 / NCTC 2599 / NRRL B-3711).